We begin with the raw amino-acid sequence, 227 residues long: Phosphatidylserine decarboxylase proenzyme (227 aa).

S169 functions as the Schiff-base intermediate with substrate; via pyruvic acid in the catalytic mechanism. Pyruvic acid (Ser); by autocatalysis is present on S169. A disordered region spans residues G197–S227. Residues R206 to S227 are compositionally biased toward low complexity.

It belongs to the phosphatidylserine decarboxylase family. PSD-A subfamily. Heterodimer of a large membrane-associated beta subunit and a small pyruvoyl-containing alpha subunit. Pyruvate serves as cofactor. Post-translationally, is synthesized initially as an inactive proenzyme. Formation of the active enzyme involves a self-maturation process in which the active site pyruvoyl group is generated from an internal serine residue via an autocatalytic post-translational modification. Two non-identical subunits are generated from the proenzyme in this reaction, and the pyruvate is formed at the N-terminus of the alpha chain, which is derived from the carboxyl end of the proenzyme. The post-translation cleavage follows an unusual pathway, termed non-hydrolytic serinolysis, in which the side chain hydroxyl group of the serine supplies its oxygen atom to form the C-terminus of the beta chain, while the remainder of the serine residue undergoes an oxidative deamination to produce ammonia and the pyruvoyl prosthetic group on the alpha chain.

It is found in the cell membrane. The catalysed reaction is a 1,2-diacyl-sn-glycero-3-phospho-L-serine + H(+) = a 1,2-diacyl-sn-glycero-3-phosphoethanolamine + CO2. It functions in the pathway phospholipid metabolism; phosphatidylethanolamine biosynthesis; phosphatidylethanolamine from CDP-diacylglycerol: step 2/2. Functionally, catalyzes the formation of phosphatidylethanolamine (PtdEtn) from phosphatidylserine (PtdSer). This chain is Phosphatidylserine decarboxylase proenzyme, found in Salinibacter ruber (strain DSM 13855 / M31).